A 68-amino-acid polypeptide reads, in one-letter code: Small integral membrane protein 10-like protein 3 (68 aa).

Expressed specifically in salivary glands (at protein level).

The protein is Small integral membrane protein 10-like protein 3 of Mus musculus (Mouse).